The chain runs to 882 residues: Alanine--tRNA ligase (882 aa).

Zn(2+) contacts are provided by His576, His580, Cys678, and His682.

The protein belongs to the class-II aminoacyl-tRNA synthetase family. Requires Zn(2+) as cofactor.

The protein resides in the cytoplasm. It catalyses the reaction tRNA(Ala) + L-alanine + ATP = L-alanyl-tRNA(Ala) + AMP + diphosphate. In terms of biological role, catalyzes the attachment of alanine to tRNA(Ala) in a two-step reaction: alanine is first activated by ATP to form Ala-AMP and then transferred to the acceptor end of tRNA(Ala). Also edits incorrectly charged Ser-tRNA(Ala) and Gly-tRNA(Ala) via its editing domain. The sequence is that of Alanine--tRNA ligase from Anaplasma marginale (strain St. Maries).